A 175-amino-acid chain; its full sequence is MLAALLVCAMVALTRAANGDTGKEAVMTGSSGKNLTECPTDWKMFNGRCFLFNPLQLHWAHAQISCMKDGANLASIHSLEEYAFVKELTTAGLIPAWIGGSDCHVSTYWFWMDSTSMDFTDWCAAQPDFTLTECCIQINVGVGKCWNDTPCTHLHASVCAKPATVIPEVTPPSIM.

The signal sequence occupies residues 1–16 (MLAALLVCAMVALTRA). A propeptide spanning residues 17 to 33 (ANGDTGKEAVMTGSSGK) is cleaved from the precursor. The region spanning 36–163 (TECPTDWKMF…LHASVCAKPA (128 aa)) is the C-type lectin domain. 5 disulfides stabilise this stretch: Cys38/Cys49, Cys66/Cys159, Cys103/Cys134, Cys123/Cys145, and Cys135/Cys151.

The protein localises to the secreted. Its function is as follows. Antifreeze proteins lower the blood freezing point. The protein is Type-2 ice-structuring protein of Osmerus mordax (Rainbow smelt).